The chain runs to 114 residues: Nucleoid-associated protein Clos_2855 (114 aa).

The protein belongs to the YbaB/EbfC family. In terms of assembly, homodimer.

The protein resides in the cytoplasm. It localises to the nucleoid. Its function is as follows. Binds to DNA and alters its conformation. May be involved in regulation of gene expression, nucleoid organization and DNA protection. This chain is Nucleoid-associated protein Clos_2855, found in Alkaliphilus oremlandii (strain OhILAs) (Clostridium oremlandii (strain OhILAs)).